Reading from the N-terminus, the 129-residue chain is Phosphoribosyl-AMP cyclohydrolase (129 aa).

Asp78 provides a ligand contact to Mg(2+). Cys79 lines the Zn(2+) pocket. Mg(2+) is bound by residues Asp80 and Asp82. Zn(2+) contacts are provided by Cys96 and Cys103.

It belongs to the PRA-CH family. In terms of assembly, homodimer. Requires Mg(2+) as cofactor. It depends on Zn(2+) as a cofactor.

It localises to the cytoplasm. The catalysed reaction is 1-(5-phospho-beta-D-ribosyl)-5'-AMP + H2O = 1-(5-phospho-beta-D-ribosyl)-5-[(5-phospho-beta-D-ribosylamino)methylideneamino]imidazole-4-carboxamide. It participates in amino-acid biosynthesis; L-histidine biosynthesis; L-histidine from 5-phospho-alpha-D-ribose 1-diphosphate: step 3/9. Functionally, catalyzes the hydrolysis of the adenine ring of phosphoribosyl-AMP. The sequence is that of Phosphoribosyl-AMP cyclohydrolase from Nitrosomonas europaea (strain ATCC 19718 / CIP 103999 / KCTC 2705 / NBRC 14298).